Reading from the N-terminus, the 432-residue chain is Polyadenylate-binding protein RBP47C (432 aa).

Residues 1-55 form a disordered region; sequence MADVKIQSESESSDSHPVVDNQPPPPPPPPQQPAKEEENQPKTSPTPPPHWMRYP. The segment covering 22 to 32 has biased composition (pro residues); that stretch reads QPPPPPPPPQQ. RRM domains lie at 101–183 and 197–276; these read KTIW…WASF and LSIF…PATP. The segment at 271 to 293 is disordered; it reads IGPATPRKTNGYQQQGGYMPNGT. A compositionally biased stretch (polar residues) spans 277 to 286; it reads RKTNGYQQQG. The RRM 3 domain occupies 304–376; it reads TTIFVGGLDS…QTVRLSWGRN (73 aa).

Belongs to the polyadenylate-binding RBP47 family. As to quaternary structure, interacts with the poly(A) tail of mRNA in nucleus. In terms of tissue distribution, expressed in leaves, stems, flowers, and seedlings.

The protein localises to the nucleus. Its subcellular location is the cytoplasmic granule. Its function is as follows. Heterogeneous nuclear ribonucleoprotein (hnRNP)-protein binding the poly(A) tail of mRNA and probably involved in some steps of pre-mRNA maturation. The polypeptide is Polyadenylate-binding protein RBP47C (RBP47C) (Arabidopsis thaliana (Mouse-ear cress)).